Here is a 347-residue protein sequence, read N- to C-terminus: Transcription factor JunB (347 aa).

Glycyl lysine isopeptide (Lys-Gly) (interchain with G-Cter in SUMO2) cross-links involve residues Lys-4, Lys-33, and Lys-36. A disordered region spans residues 50–77 (LKAPGARGPGPEGNGGGSYFSSQGSDTG). Gly residues predominate over residues 56 to 67 (RGPGPEGNGGGS). Polar residues predominate over residues 68 to 77 (YFSSQGSDTG). A Glycyl lysine isopeptide (Lys-Gly) (interchain with G-Cter in SUMO2) cross-link involves residue Lys-81. Phosphothreonine occurs at positions 102 and 104. Phosphoserine is present on Ser-117. A Glycyl lysine isopeptide (Lys-Gly) (interchain with G-Cter in SUMO2) cross-link involves residue Lys-141. The residue at position 240 (Lys-240) is an N6-acetyllysine; alternate. Residue Lys-240 forms a Glycyl lysine isopeptide (Lys-Gly) (interchain with G-Cter in SUMO1); alternate linkage. Lys-240 participates in a covalent cross-link: Glycyl lysine isopeptide (Lys-Gly) (interchain with G-Cter in SUMO2); alternate. The span at 241–253 (EEPQTVPEARSRD) shows a compositional bias: basic and acidic residues. The disordered stretch occupies residues 241 to 260 (EEPQTVPEARSRDATPPVSP). The residue at position 251 (Ser-251) is a Phosphoserine. Thr-255 carries the phosphothreonine modification. The residue at position 259 (Ser-259) is a Phosphoserine. The interval 268 to 295 (RIKVERKRLRNRLAATKCRKRKLERIAR) is basic motif. The 64-residue stretch at 268–331 (RIKVERKRLR…AQLKQKVMTH (64 aa)) folds into the bZIP domain. The tract at residues 296-324 (LEDKVKTLKAENAGLSSTAGLLREQVAQL) is leucine-zipper. Lys-343 participates in a covalent cross-link: Glycyl lysine isopeptide (Lys-Gly) (interchain with G-Cter in SUMO2).

Belongs to the bZIP family. Jun subfamily. Binds DNA as a homodimer or as a heterodimer with another member of the Jun/Fos family. Component of an AP-1 transcription factor complex composed of JUN-FOS heterodimers. As part of the AP-1 transcription factor complex, forms heterodimers with FOSB, thereby binding to the AP-1 consensus sequence and stimulating transcription. Interacts with ITCH (via its WW domains). Ubiquitinated by ITCH, leading to its degradation.

It is found in the nucleus. Transcription factor involved in regulating gene activity following the primary growth factor response. Binds to the DNA sequence 5'-TGA[GC]TCA-3'. Heterodimerizes with proteins of the FOS family to form an AP-1 transcription complex, thereby enhancing its DNA binding activity to an AP-1 consensus sequence and its transcriptional activity. In Bos taurus (Bovine), this protein is Transcription factor JunB (JUNB).